We begin with the raw amino-acid sequence, 309 residues long: Olfactory receptor 1L8 (309 aa).

Over 1 to 26 (MERINHTSSVSEFILLGLSSRPEDQK) the chain is Extracellular. The N-linked (GlcNAc...) asparagine glycan is linked to Asn5. A helical membrane pass occupies residues 27–50 (TLFVLFLIVYLVTITGNLLIILAI). The Cytoplasmic segment spans residues 51 to 58 (RFNPHLQT). Residues 59–80 (PMYFFLSFLSLTDICFTTSVVP) traverse the membrane as a helical segment. At 81-101 (KMLMNFLSEKKTISYAGCLTQ) the chain is on the extracellular side. Cys98 and Cys190 are joined by a disulfide. Residues 102-121 (MYFLYALGNSDSCLLAVMAF) traverse the membrane as a helical segment. Over 122 to 140 (DRYVAVCDPFHYVTTMSHH) the chain is Cytoplasmic. A helical membrane pass occupies residues 141 to 159 (HCVLLVAFSCSFPHLHSLL). Over 160-197 (HTLLLNRLTFCDSNVIHHFLCDLSPVLKLSCSSIFVNE) the chain is Extracellular. Residues 198–220 (IVQMTEAPIVLVTRFLCIAFSYI) traverse the membrane as a helical segment. Residues 221–237 (RILTTVLKIPSTSGKRK) are Cytoplasmic-facing. Residues 238–260 (AFSTCGFYLTVVTLFYGSIFCVY) traverse the membrane as a helical segment. The Extracellular segment spans residues 261–272 (LQPPSTYAVKDH). The chain crosses the membrane as a helical span at residues 273–292 (VATIVYTVLSSMLNPFIYSL). Topologically, residues 293-309 (RNKDLKQGLRKLMSKRS) are cytoplasmic.

The protein belongs to the G-protein coupled receptor 1 family.

The protein resides in the cell membrane. Odorant receptor. This chain is Olfactory receptor 1L8 (OR1L8), found in Homo sapiens (Human).